A 101-amino-acid polypeptide reads, in one-letter code: Small ribosomal subunit protein uS14A (101 aa).

The disordered stretch occupies residues 28–57 (KDIIRSPSSAPEQRSTAQRALARQPRDASP). Polar residues predominate over residues 33–45 (SPSSAPEQRSTAQ).

Belongs to the universal ribosomal protein uS14 family. Part of the 30S ribosomal subunit. Contacts proteins S3 and S10.

In terms of biological role, binds 16S rRNA, required for the assembly of 30S particles and may also be responsible for determining the conformation of the 16S rRNA at the A site. This Mycobacterium bovis (strain ATCC BAA-935 / AF2122/97) protein is Small ribosomal subunit protein uS14A.